A 402-amino-acid polypeptide reads, in one-letter code: 1-deoxy-D-xylulose 5-phosphate reductoisomerase (402 aa).

Positions 27, 28, 29, 30, 53, 54, 55, and 140 each coordinate NADPH. K141 contacts 1-deoxy-D-xylulose 5-phosphate. E142 lines the NADPH pocket. D166 serves as a coordination point for Mn(2+). Positions 167, 168, 192, and 215 each coordinate 1-deoxy-D-xylulose 5-phosphate. Residue E168 participates in Mn(2+) binding. G221 contacts NADPH. 1-deoxy-D-xylulose 5-phosphate is bound by residues S228, N233, K234, and E237. A Mn(2+)-binding site is contributed by E237.

It belongs to the DXR family. Mg(2+) is required as a cofactor. It depends on Mn(2+) as a cofactor.

The enzyme catalyses 2-C-methyl-D-erythritol 4-phosphate + NADP(+) = 1-deoxy-D-xylulose 5-phosphate + NADPH + H(+). It functions in the pathway isoprenoid biosynthesis; isopentenyl diphosphate biosynthesis via DXP pathway; isopentenyl diphosphate from 1-deoxy-D-xylulose 5-phosphate: step 1/6. Functionally, catalyzes the NADPH-dependent rearrangement and reduction of 1-deoxy-D-xylulose-5-phosphate (DXP) to 2-C-methyl-D-erythritol 4-phosphate (MEP). In Lawsonia intracellularis (strain PHE/MN1-00), this protein is 1-deoxy-D-xylulose 5-phosphate reductoisomerase.